Here is a 464-residue protein sequence, read N- to C-terminus: UDP-N-acetylmuramoylalanine--D-glutamate ligase (464 aa).

127-133 (GSNGKST) is an ATP binding site.

It belongs to the MurCDEF family.

It localises to the cytoplasm. It catalyses the reaction UDP-N-acetyl-alpha-D-muramoyl-L-alanine + D-glutamate + ATP = UDP-N-acetyl-alpha-D-muramoyl-L-alanyl-D-glutamate + ADP + phosphate + H(+). The protein operates within cell wall biogenesis; peptidoglycan biosynthesis. Its function is as follows. Cell wall formation. Catalyzes the addition of glutamate to the nucleotide precursor UDP-N-acetylmuramoyl-L-alanine (UMA). This is UDP-N-acetylmuramoylalanine--D-glutamate ligase from Dinoroseobacter shibae (strain DSM 16493 / NCIMB 14021 / DFL 12).